A 153-amino-acid chain; its full sequence is Putative ubiquitin-conjugating enzyme E2 N-like (153 aa).

A UBC core domain is found at 3 to 150 (ELPHRIIKET…ARAWTRLYAM (148 aa)). The residue at position 83 (lysine 83) is an N6-acetyllysine.

This sequence belongs to the ubiquitin-conjugating enzyme family. As to expression, expressed in epididymis (at protein level).

The polypeptide is Putative ubiquitin-conjugating enzyme E2 N-like (UBE2NL) (Homo sapiens (Human)).